Consider the following 118-residue polypeptide: Probable small nuclear ribonucleoprotein Sm D2 (118 aa).

Residues 29–115 (LSILTNSVKN…VILVVKNPLA (87 aa)) enclose the Sm domain.

It belongs to the snRNP core protein family.

The protein resides in the nucleus. It localises to the cytoplasm. The protein localises to the cytosol. In terms of biological role, plays a role in pre-mRNA splicing as a core component of the spliceosomal U1, U2, U4 and U5 small nuclear ribonucleoproteins (snRNPs), the building blocks of the spliceosome. The polypeptide is Probable small nuclear ribonucleoprotein Sm D2 (snr-4) (Caenorhabditis elegans).